The primary structure comprises 225 residues: Probable CDP-diacylglycerol--inositol 3-phosphatidyltransferase 2 (225 aa).

2 helical membrane passes run 6–26 (PATLSVYLYIPNIVGYMRVLL) and 29–49 (IAFSVCFSNKTLFSLLYFFSF). The Mg(2+) site is built by Asp-52 and Asp-55. A CDP-1,2-diacyl-sn-glycerol contacts are provided by Gly-56, Arg-60, and Ser-66. The Mg(2+) site is built by Asp-73 and Asp-77. The active-site Proton acceptor is the Asp-77. 3 consecutive transmembrane segments (helical) span residues 84–104 (LLVILSQIYRPSLVFLSLLAL), 143–163 (MFMGYCCVSCEVLYIILLLIA), and 184–204 (LSLLLALSIFGWSIKQIINVI).

Belongs to the CDP-alcohol phosphatidyltransferase class-I family. Requires Mg(2+) as cofactor. Mn(2+) serves as cofactor.

Its subcellular location is the membrane. The catalysed reaction is a CDP-1,2-diacyl-sn-glycerol + myo-inositol = a 1,2-diacyl-sn-glycero-3-phospho-(1D-myo-inositol) + CMP + H(+). In terms of biological role, catalyzes the biosynthesis of phosphatidylinositol (PtdIns) as well as PtdIns:inositol exchange reaction. May thus act to reduce an excessive cellular PtdIns content. The exchange activity is due to the reverse reaction of PtdIns synthase and is dependent on CMP, which is tightly bound to the enzyme. This Arabidopsis thaliana (Mouse-ear cress) protein is Probable CDP-diacylglycerol--inositol 3-phosphatidyltransferase 2 (PIS2).